Consider the following 98-residue polypeptide: Guanine nucleotide-binding protein subunit gamma 1 (98 aa).

One can recognise a G protein gamma domain in the interval 19 to 98 (GKHRILAELA…GGEGCRCLIL (80 aa)). Positions 20–50 (KHRILAELARVEQEVAFLEKELKEVENTDIV) form a coiled coil. Positions 88-94 (NGGEGCR) are regulates lipidation and cell membrane subcellular localization. Cys93 is lipidated: S-palmitoyl cysteine. At Cys95 the chain carries Cysteine methyl ester. Cys95 is lipidated: S-farnesyl cysteine. The propeptide at 96 to 98 (LIL) is removed in mature form.

G proteins are composed of 3 units, alpha, beta and gamma. Interacts with the beta subunit GB1. The dimer GB1-GG1 interacts with NDL1, NDL2 and NDL3. Binds to NUDT7. In terms of tissue distribution, mostly expressed in seedlings (especially at the hypocotyl/root junction), young cauline leaves, open flowers, and floral stems, and, to a lower extent, in roots (restricted to the stele), rosette leaves (restricted to veins), siliques, and unopened floral buds. Also present in hydathods.

It localises to the cell membrane. The protein localises to the golgi apparatus membrane. It is found in the golgi apparatus. The protein resides in the trans-Golgi network membrane. Its subcellular location is the cytoplasm. Functionally, guanine nucleotide-binding proteins (G proteins) are involved as a modulator or transducer in various transmembrane signaling systems. The beta and gamma chains are required for the GTPase activity, for replacement of GDP by GTP, and for G protein-effector interaction. Involved in the abscisic acid (ABA) and ethylene signaling pathways. Regulates acropetal transport of auxin (IAA) in roots and hypocotyls, and thus modulates root architecture (e.g. lateral root formation). The heterotrimeric G-protein controls defense responses to necrotrophic and vascular fungi probably by modulating cell wall-related genes expression; involved in resistance to fungal pathogens such as Alternaria brassicicola, Plectosphaerella cucumerina and Fusarium oxysporum. The sequence is that of Guanine nucleotide-binding protein subunit gamma 1 (GG1) from Arabidopsis thaliana (Mouse-ear cress).